We begin with the raw amino-acid sequence, 384 residues long: Cell division protein FtsZ (384 aa).

Residues 20 to 24 (GGGGN), 107 to 109 (GTG), Glu-138, Arg-142, and Asn-186 each bind GTP.

This sequence belongs to the FtsZ family. In terms of assembly, homodimer. Polymerizes to form a dynamic ring structure in a strictly GTP-dependent manner. Interacts directly with several other division proteins.

It localises to the cytoplasm. Essential cell division protein that forms a contractile ring structure (Z ring) at the future cell division site. The regulation of the ring assembly controls the timing and the location of cell division. One of the functions of the FtsZ ring is to recruit other cell division proteins to the septum to produce a new cell wall between the dividing cells. Binds GTP and shows GTPase activity. This chain is Cell division protein FtsZ, found in Wigglesworthia glossinidia brevipalpis.